The primary structure comprises 90 residues: Acylphosphatase (90 aa).

Residues 3-90 (AVTLKATGRV…QNYHDFRITN (88 aa)) form the Acylphosphatase-like domain. Catalysis depends on residues arginine 18 and asparagine 36.

The protein belongs to the acylphosphatase family.

The enzyme catalyses an acyl phosphate + H2O = a carboxylate + phosphate + H(+). The polypeptide is Acylphosphatase (acyP) (Lactiplantibacillus plantarum (strain ATCC BAA-793 / NCIMB 8826 / WCFS1) (Lactobacillus plantarum)).